The sequence spans 680 residues: NADPH--cytochrome P450 reductase (680 aa).

Residues 1–5 (MALDK) lie on the Lumenal side of the membrane. A helical membrane pass occupies residues 6–23 (LDLYVIITLVVAIAAYFA). The Cytoplasmic portion of the chain corresponds to 24–680 (KNQFLDQQQD…VQNRYQEDVW (657 aa)). Positions 60–204 (TLLLFGSQTG…DFLAWKDNVF (145 aa)) constitute a Flavodoxin-like domain. Residues 66–71 (SQTGTA), 117–120 (ATYG), 152–161 (LGNSTYEFFN), and Asp187 contribute to the FMN site. In terms of domain architecture, FAD-binding FR-type spans 264-509 (THPFLARIVK…NGPRGKFSKF (246 aa)). Arg283 contributes to the NADP(+) binding site. FAD-binding positions include 439 to 442 (RYYS), 457 to 459 (TAV), and 473 to 476 (GVVT). Residues Thr537, 599-600 (SR), 606-610 (KVYVQ), and Asp642 each bind NADP(+). Residue Trp680 coordinates FAD.

This sequence belongs to the NADPH--cytochrome P450 reductase family. The protein in the N-terminal section; belongs to the flavodoxin family. In the C-terminal section; belongs to the flavoprotein pyridine nucleotide cytochrome reductase family. FAD serves as cofactor. The cofactor is FMN.

It is found in the endoplasmic reticulum membrane. The protein resides in the mitochondrion outer membrane. It localises to the cell membrane. It carries out the reaction 2 oxidized [cytochrome P450] + NADPH = 2 reduced [cytochrome P450] + NADP(+) + H(+). Its function is as follows. This enzyme is required for electron transfer from NADP to cytochrome P450 in microsomes. It can also provide electron transfer to heme oxygenase and cytochrome B5. Involved in ergosterol biosynthesis. In Candida tropicalis (Yeast), this protein is NADPH--cytochrome P450 reductase.